Here is a 175-residue protein sequence, read N- to C-terminus: Transcriptional repressor NrdR (175 aa).

A zinc finger lies at 3–34; sequence CPICQDTNSRVLESRSAESGKSIRRRRECMNC. Residues 49 to 139 form the ATP-cone domain; sequence ITIIKRDGKK…VYRKFQGIRD (91 aa).

The protein belongs to the NrdR family. The cofactor is Zn(2+).

In terms of biological role, negatively regulates transcription of bacterial ribonucleotide reductase nrd genes and operons by binding to NrdR-boxes. The protein is Transcriptional repressor NrdR of Trichodesmium erythraeum (strain IMS101).